The following is a 104-amino-acid chain: Protein U9 (104 aa).

A helical transmembrane segment spans residues G37–K54.

Its subcellular location is the host membrane. The chain is Protein U9 (U9) from Human herpesvirus 6B (HHV-6 variant B).